The sequence spans 516 residues: MDGQVTVKRHGDTHFANIGYGYYTFGVSVGYILLLLLLRKRRGTAVPRSRHKLFQMMIDGSPALHLPILLLFLEIAFLGHYSVIDHASVYIKRLGRLSYVLLFLNIFLTLRPNYILSDYTYVQLLPMHMWLSRAISTFGVFHGLAFVIKWQLDNEVSLASKLFNLWNLLGFIVWILLIILLITSTGVIRRRSYKSFYMVHQINAFAISFIVPVHARPGVALPYTITIAVLLGLHALARVSFCMSSAVVHKLSNYQKGSKLVRIKLPRNVMPEHFTPGSHIRVSPYRRSNPLYWLVPSHPFTIASLPDDDHVDLILREHGHFEFEVGPRYSIVHNYEGITALQLGLVNRVTIVVGGTGISLGLPLFRYFKENTDIGYLKMIWTVKSHADLHVLDDFEGIDIFVTQNTTTTPIPGASESWDEIPLEEFELNSMDDLEAEEEHLGESGALLPTTKRKKDPGAINIGRRLDWNVELASFVRSEGSSDQLLIVCGPESLVKDGVQFATDHNIVFYKEVYSF.

7 helical membrane passes run 18–38 (IGYG…LLLL), 64–84 (LHLP…YSVI), 97–117 (LSYV…YILS), 128–148 (HMWL…AFVI), 168–188 (LLGF…TGVI), 195–215 (SFYM…PVHA), and 217–237 (PGVA…HALA). Residues 94–207 (LGRLSYVLLF…MVHQINAFAI (114 aa)) form the Ferric oxidoreductase domain. One can recognise an FAD-binding FR-type domain in the interval 238–363 (RVSFCMSSAV…GGTGISLGLP (126 aa)).

Belongs to the ferric reductase (FRE) family. AIM14 subfamily.

It is found in the membrane. Its function is as follows. Probable cell surface metalloreductase. May be involved in iron or copper homeostasis. The polypeptide is Probable metalloreductase AIM14 (AIM14) (Eremothecium gossypii (strain ATCC 10895 / CBS 109.51 / FGSC 9923 / NRRL Y-1056) (Yeast)).